Reading from the N-terminus, the 1341-residue chain is WASH complex subunit 2A (1341 aa).

Positions 1 to 220 are sufficient for interaction with WASHC3, WASHC4 and WASHC5; required for interaction with WASHC1; the sequence is MMNRTTPDQE…VGSDRGSIVD (220 aa). Residues 202 to 214 are compositionally biased toward low complexity; sequence GELSSEEGSVGSD. Residues 202-405 are disordered; it reads GELSSEEGSV…SSSKPGKKIP (204 aa). The segment covering 220–232 has biased composition (acidic residues); the sequence is DTEEEKEEEESDE. Basic and acidic residues predominate over residues 233–244; it reads DFAHHSDNEQNR. Acidic residues-rich tracts occupy residues 250–259 and 266–276; these read SDEEEDDDGC and EKEEEDIEDIE. Over residues 293–307 the composition is skewed to basic and acidic residues; sequence LAARIKGDAVGRVDE. A compositionally biased stretch (gly residues) spans 355 to 366; it reads GSGGGLFSGGKG. The segment at 356-600 is sufficient for interaction with CCDC93; sequence SGGGLFSGGK…QTLCLQAQRE (245 aa). A required for interaction with CCDC22 and VPS35L region spans residues 356-742; that stretch reads SGGGLFSGGK…KEAQLGVKSV (387 aa). Residues 357–1341 form an interaction with VPS35 region; the sequence is GGGLFSGGKG…DDPLNAFGGQ (985 aa). Short sequence motifs (LFa) lie at residues 367 to 378, 411 to 419, 450 to 463, and 482 to 491; these read LFDDEDEESDLF, VFLGDTDVF, LFDDDDGDDDDDFF, and IFGDEEGDLF. Positions 422-554 are disordered; it reads ASVPSMKEPQ…EDLFSSQSAS (133 aa). Acidic residues predominate over residues 451 to 462; sequence FDDDDGDDDDDF. Positions 507–517 are enriched in basic and acidic residues; that stretch reads DENKARAEKKV. Over residues 518-536 the composition is skewed to polar residues; that stretch reads TLSSSKNLKPSSETKTQKG. 3 short sequence motifs (LFa) span residues 537–548, 572–583, and 617–629; these read LFSDEEDSEDLF, LFDDEDEEDNLF, and LFSSDEEDQWNIP. S539 is subject to Phosphoserine. Disordered regions lie at residues 621–664, 696–739, and 751–838; these read DEED…KTSL, DSGG…QLGV, and ESLK…KSTG. The segment covering 637-647 has biased composition (basic and acidic residues); that stretch reads SDSRSKGEPRD. Short sequence motifs (LFa) lie at residues 664-674, 690-702, and 726-738; these read LFEEDEEDDLF, LFEDDVDSGGSLF, and LFSDEEEKEAQLG. Basic and acidic residues predominate over residues 751–768; it reads ESLKFGRTDVAESEKEGL. The short motif at 803 to 817 is the LFa 11 element; the sequence is LFDEEEDKMEDQNII. Basic and acidic residues predominate over residues 823 to 834; the sequence is EVGKGRDPDAHP. 3 short sequence motifs (LFa) span residues 839-847, 856-862, and 878-888; these read VFQDEELLF, DPDVDLF, and LFGDDEDDDLF. Disordered regions lie at residues 881–951 and 988–1205; these read DDED…KEPS and FPSS…LEDE. Composition is skewed to basic and acidic residues over residues 898 to 911 and 917 to 931; these read QEKKRVVKKDHSVD and KHPESIQGSKEKGIW. The segment at 937 to 1341 is interaction with phospholipids; that stretch reads QDSSGLAPFK…DDPLNAFGGQ (405 aa). The span at 1028–1046 shows a compositional bias: basic residues; it reads NKSRVKMRGKRRPQTRAAR. Positions 1029-1047 are required for interaction with F-actin-capping protein subunit alpha (CAPZA1 or CAPZA2 or CAPZA3); that stretch reads KSRVKMRGKRRPQTRAARR. 2 positions are modified to phosphoserine: S1054 and S1087. Low complexity predominate over residues 1094 to 1110; that stretch reads EALAAAAAPWEGGPVPG. S1114 carries the phosphoserine modification. Short sequence motifs (LFa) lie at residues 1129–1136, 1171–1185, 1201–1209, 1234–1240, 1262–1270, and 1290–1299; these read LFDSGDIF, MFPALGEASSDDDLF, LLEDEDDLF, IFEDDIF, LFDDNIDIF, and IFDDDMDDIF. Polar residues predominate over residues 1135–1145; that stretch reads IFSTGTGSQSV. The interval 1302–1326 is disordered; the sequence is GIQAKTTKPKSRSAQAAPEPRFEHK. The LFa 21 motif lies at 1330-1338; it reads IFDDPLNAF.

It belongs to the FAM21 family. As to quaternary structure, component of the WASH core complex also described as WASH regulatory complex (SHRC) composed of WASH (WASHC1, WASH2P or WASH3P), WASHC2 (WASHC2A or WASHC2C), WASHC3, WASHC4 and WASHC5; in the complex interacts (via N-terminus) directly with WASHC1. The WASH core complex associates with the F-actin-capping protein dimer (formed by CAPZA1, CAPZA2 or CAPZA3 and CAPZB) in a transient or substoichiometric manner which was initially described as WASH complex. Interacts with VPS35; mediates the association with the retromer CSC complex. Interacts with FKBP15. Interacts with CCDC93, CCDC22, VPS35L; indicative for an association of the WASH core complex with the CCC and retriever complexes. Directly interacts with TBC1D23.

The protein resides in the early endosome membrane. It localises to the cell membrane. In terms of biological role, acts at least in part as component of the WASH core complex whose assembly at the surface of endosomes inhibits WASH nucleation-promoting factor (NPF) activity in recruiting and activating the Arp2/3 complex to induce actin polymerization and is involved in the fission of tubules that serve as transport intermediates during endosome sorting. Mediates the recruitment of the WASH core complex to endosome membranes via binding to phospholipids and VPS35 of the retromer CSC. Mediates the recruitment of the F-actin-capping protein dimer to the WASH core complex probably promoting localized F-actin polymerization needed for vesicle scission. Via its C-terminus binds various phospholipids, most strongly phosphatidylinositol 4-phosphate (PtdIns-(4)P), phosphatidylinositol 5-phosphate (PtdIns-(5)P) and phosphatidylinositol 3,5-bisphosphate (PtdIns-(3,5)P2). Involved in the endosome-to-plasma membrane trafficking and recycling of SNX27-retromer-dependent cargo proteins, such as GLUT1. Required for the association of DNAJC13, ENTR1, ANKRD50 with retromer CSC subunit VPS35. Required for the endosomal recruitment of CCC complex subunits COMMD1 and CCDC93 as well as the retriever complex subunit VPS35L. In Homo sapiens (Human), this protein is WASH complex subunit 2A.